Here is a 418-residue protein sequence, read N- to C-terminus: Histidinol dehydrogenase (418 aa).

Positions 119, 180, and 203 each coordinate NAD(+). The substrate site is built by Thr-226, Gln-248, and His-251. Zn(2+) contacts are provided by Gln-248 and His-251. Residues Glu-316 and His-317 each act as proton acceptor in the active site. Substrate-binding residues include His-317, Asp-350, Glu-404, and His-409. Asp-350 serves as a coordination point for Zn(2+). His-409 is a binding site for Zn(2+).

The protein belongs to the histidinol dehydrogenase family. The cofactor is Zn(2+).

It catalyses the reaction L-histidinol + 2 NAD(+) + H2O = L-histidine + 2 NADH + 3 H(+). Its pathway is amino-acid biosynthesis; L-histidine biosynthesis; L-histidine from 5-phospho-alpha-D-ribose 1-diphosphate: step 9/9. In terms of biological role, catalyzes the sequential NAD-dependent oxidations of L-histidinol to L-histidinaldehyde and then to L-histidine. This chain is Histidinol dehydrogenase, found in Staphylococcus aureus (strain MSSA476).